The chain runs to 645 residues: MSHNTVIPTTDISPKPDPARPRKAQRDAAQEFINSIQGVTFPNSRRIYLQGSRDDIQVPMREIQLSPTLIGGTKEEPQYEENEAIPVYDTSGAYGDPDAKLDVHVGLTQLRQPWIDERQDTEPVAALSSDFTQQRLTDAGLDHLRFNHRPHPLKARKDKRVTQLHYARQGIITPEMEFIALRENMGRERIRGDVLRQQHPGQSFGAQLPENITPEFVRQEVAAGRAIIPANINHPESEPMIIGRNFLVKVNANIGNSSVTSSIEEEVEKLIWSTRWGADTVMDLSTGRYIHETREWILRNSPVPIGTVPIYQALEKVNGGAENLTWEIFRDTLLEQAEQGVDYFTIHAGVLLRYVPMTAKRLTGIVSRGGSIMAKWCLSHHQENFLYQHFREICEICAAYDVSLSLGDGLRPGSIQDANDEAQFAELHTLGELTKIAWEYDVQVMIEGPGHIPMQMIRRNMTEELEHCHEAPFYTLGPLTTDIAPGYDHFTSGIGAAMIGWFGCAMLCYVTPKEHLGLPNKDDVKQGLITYKIAAHAADLAKGHPGAQIRDNAMSKARFEFRWEDQFNLALDPDTARAYHDETLPQASGKIAHFCSMCGPKFCSMKISQEVRDYAAGMEQMSEAFRAHGSELYHSVEDVSHEQSA.

A compositionally biased stretch (polar residues) spans 1–12 (MSHNTVIPTTDI). Residues 1-25 (MSHNTVIPTTDISPKPDPARPRKAQ) are disordered. Residues Asn253, Met282, Tyr311, His347, 367–369 (SRG), 408–411 (DGLR), and Glu447 each bind substrate. His451 is a Zn(2+) binding site. Tyr474 lines the substrate pocket. His515 is a binding site for Zn(2+). Cys595, Cys598, and Cys603 together coordinate [4Fe-4S] cluster.

The protein belongs to the ThiC family. Homodimer. [4Fe-4S] cluster is required as a cofactor.

It catalyses the reaction 5-amino-1-(5-phospho-beta-D-ribosyl)imidazole + S-adenosyl-L-methionine = 4-amino-2-methyl-5-(phosphooxymethyl)pyrimidine + CO + 5'-deoxyadenosine + formate + L-methionine + 3 H(+). Its pathway is cofactor biosynthesis; thiamine diphosphate biosynthesis. Its function is as follows. Catalyzes the synthesis of the hydroxymethylpyrimidine phosphate (HMP-P) moiety of thiamine from aminoimidazole ribotide (AIR) in a radical S-adenosyl-L-methionine (SAM)-dependent reaction. This Photorhabdus laumondii subsp. laumondii (strain DSM 15139 / CIP 105565 / TT01) (Photorhabdus luminescens subsp. laumondii) protein is Phosphomethylpyrimidine synthase.